The following is a 1070-amino-acid chain: DNA-directed RNA polymerase subunit beta (1070 aa).

It belongs to the RNA polymerase beta chain family. In terms of assembly, in plastids the minimal PEP RNA polymerase catalytic core is composed of four subunits: alpha, beta, beta', and beta''. When a (nuclear-encoded) sigma factor is associated with the core the holoenzyme is formed, which can initiate transcription.

The protein localises to the plastid. The enzyme catalyses RNA(n) + a ribonucleoside 5'-triphosphate = RNA(n+1) + diphosphate. DNA-dependent RNA polymerase catalyzes the transcription of DNA into RNA using the four ribonucleoside triphosphates as substrates. The polypeptide is DNA-directed RNA polymerase subunit beta (Cuscuta exaltata (Tall dodder)).